The following is a 101-amino-acid chain: Small ribosomal subunit protein uS14 (101 aa).

It belongs to the universal ribosomal protein uS14 family. Part of the 30S ribosomal subunit. Contacts proteins S3 and S10.

In terms of biological role, binds 16S rRNA, required for the assembly of 30S particles and may also be responsible for determining the conformation of the 16S rRNA at the A site. This is Small ribosomal subunit protein uS14 from Aliivibrio fischeri (strain MJ11) (Vibrio fischeri).